Here is a 138-residue protein sequence, read N- to C-terminus: Putative phosphatidylinositol 3,4,5-trisphosphate 3-phosphatase TPTE2P1 (138 aa).

The 75-residue stretch at 1-75 (MPAAFPCVFP…FAVEILFGMV (75 aa)) folds into the C2 tensin-type domain.

This chain is Putative phosphatidylinositol 3,4,5-trisphosphate 3-phosphatase TPTE2P1 (TPTE2P1), found in Homo sapiens (Human).